A 263-amino-acid polypeptide reads, in one-letter code: Non-homologous end joining protein Ku 3 (263 aa).

The 164-residue stretch at 6 to 169 (FGLVSVPVQL…WADEVRDPHR (164 aa)) folds into the Ku domain.

This sequence belongs to the prokaryotic Ku family. As to quaternary structure, homodimer. Interacts with LigD.

With LigD forms a non-homologous end joining (NHEJ) DNA repair enzyme, which repairs dsDNA breaks with reduced fidelity. Binds linear dsDNA with 5'- and 3'- overhangs but not closed circular dsDNA nor ssDNA. Recruits and stimulates the ligase activity of LigD. This is Non-homologous end joining protein Ku 3 from Saccharopolyspora erythraea (strain ATCC 11635 / DSM 40517 / JCM 4748 / NBRC 13426 / NCIMB 8594 / NRRL 2338).